The following is a 668-amino-acid chain: Acetoin catabolism regulatory protein (668 aa).

Residues 341 to 570 form the Sigma-54 factor interaction domain; it reads LTGGDAALQL…NVLEYARAVC (230 aa). ATP-binding positions include 369 to 376 and 433 to 442; these read GETGSGKE and ADGGTLFLDE. Over residues 586–606 the composition is skewed to low complexity; sequence GPAPSAALPQPGPAQSPAAAP. Positions 586–611 are disordered; the sequence is GPAPSAALPQPGPAQSPAAAPFDPHQ. The segment at residues 630-649 is a DNA-binding region (H-T-H motif); sequence LSAVARQIGVSRMTLYRRME.

In terms of biological role, required for sigma-54-dependent transcription of acoXABC. The sequence is that of Acetoin catabolism regulatory protein (acoR) from Cupriavidus necator (strain ATCC 17699 / DSM 428 / KCTC 22496 / NCIMB 10442 / H16 / Stanier 337) (Ralstonia eutropha).